The primary structure comprises 72 residues: Protein kish-A (72 aa).

The N-terminal stretch at 1–26 (MSAIFNFQSLLTVILLLICTCAYIRS) is a signal peptide. Over 27 to 53 (LAPSLLDKNKSGLLGIFWKCARIGERK) the chain is Extracellular. Asn35 is a glycosylation site (N-linked (GlcNAc...) asparagine). A helical membrane pass occupies residues 54–71 (SPYVAVCCVVMAFSILFM). Residue Gln72 is a topological domain, cytoplasmic.

Belongs to the KISH family.

Its subcellular location is the golgi apparatus membrane. Its function is as follows. Involved in the early part of the secretory pathway. The protein is Protein kish-A (TMEM167A) of Taeniopygia guttata (Zebra finch).